Here is a 319-residue protein sequence, read N- to C-terminus: 8-methylmenaquinol:fumarate reductase iron-sulfur subunit (319 aa).

One can recognise a 2Fe-2S ferredoxin-type domain in the interval 1–96 (MKFIIDRFDG…TFRISPLGNH (96 aa)). 4 residues coordinate [2Fe-2S] cluster: Cys-51, Cys-56, Cys-59, and Cys-71. 2 consecutive 4Fe-4S ferredoxin-type domains span residues 139–168 (FDRI…QSDY) and 193–224 (VKPA…AEDI). [4Fe-4S] cluster-binding residues include Cys-148, Cys-151, Cys-154, Cys-158, Cys-204, Cys-207, Cys-210, and Cys-214.

The protein belongs to the succinate dehydrogenase/fumarate reductase iron-sulfur protein family. As to quaternary structure, the MFR complex is composed of three subunits: a flavoprotein (SdhA), an iron-sulfur protein (SdhB), and one hydrophobic anchor protein (SdhE). [2Fe-2S] cluster serves as cofactor. The cofactor is [4Fe-4S] cluster.

It is found in the periplasm. It localises to the cell membrane. The catalysed reaction is 8-methylmenaquinone-6 + succinate = 8-methylmenaquinol-6 + fumarate. Iron-sulfur subunit of 8-methylmenaquinol:fumarate reductase (MFR), that catalyzes the reduction of fumarate using 8-methylmenaquinol-6 as electron donor. The complex shows no succinate oxidation activity. Is involved in anaerobic metabolism. The sequence is that of 8-methylmenaquinol:fumarate reductase iron-sulfur subunit from Wolinella succinogenes (strain ATCC 29543 / DSM 1740 / CCUG 13145 / JCM 31913 / LMG 7466 / NCTC 11488 / FDC 602W) (Vibrio succinogenes).